A 937-amino-acid chain; its full sequence is AP-2 complex subunit beta (937 aa).

Thr2 is modified (N-acetylthreonine). Ser4 bears the Phosphoserine mark. An N6-acetyllysine modification is found at Lys265. The disordered stretch occupies residues 593–617 (LPIHHGSTDAGDSPVGTTTTTNLEQ). The segment covering 607-617 (VGTTTTTNLEQ) has biased composition (polar residues). 2 positions are modified to phosphotyrosine: Tyr737 and Tyr928.

This sequence belongs to the adaptor complexes large subunit family. As to quaternary structure, adaptor protein complex 2 (AP-2) is a heterotetramer composed of two large adaptins (alpha-type subunit AP2A1 or AP2A2 and beta-type subunit AP2B1), a medium adaptin (mu-type subunit AP2M1) and a small adaptin (sigma-type subunit AP2S1). Interacts with EPN1. Interacts with EPS15; clathrin competes with EPS15. Interacts with SNAP91; clathrin competes with SNAP91. Interacts with CLTC; clathrin competes with EPS15, SNAP91 and PIP5K1C. Interacts with LDLRAP1. Interacts with AMPH and BIN1. Interacts with ARF6 (GDP-bound). Interacts (dephosphorylated at Tyr-737) with ARRB1; phosphorylation of AP2B1 at Tyr-737 disrupts the interaction. Interacts with SLC2A8. Interacts with SCYL1 and SCYL2. Interacts with TGFBR1 and TGFBR2. Interacts with PIP5K1C; clathrin competes with PIP5K1C. Interacts with DENND1B. Interacts with FCHO1. Interacts with RFTN1. Interacts with KIAA1107. Together with AP2A1 or AP2A2 and AP2M1, it interacts with ADAM10; this interaction facilitates ADAM10 endocytosis from the plasma membrane during long-term potentiation in hippocampal neurons. Expressed in the brain (at protein level).

The protein resides in the cell membrane. The protein localises to the membrane. It is found in the coated pit. Its function is as follows. Component of the adaptor protein complex 2 (AP-2). Adaptor protein complexes function in protein transport via transport vesicles in different membrane traffic pathways. Adaptor protein complexes are vesicle coat components and appear to be involved in cargo selection and vesicle formation. AP-2 is involved in clathrin-dependent endocytosis in which cargo proteins are incorporated into vesicles surrounded by clathrin (clathrin-coated vesicles, CCVs) which are destined for fusion with the early endosome. The clathrin lattice serves as a mechanical scaffold but is itself unable to bind directly to membrane components. Clathrin-associated adaptor protein (AP) complexes which can bind directly to both the clathrin lattice and to the lipid and protein components of membranes are considered to be the major clathrin adaptors contributing the CCV formation. AP-2 also serves as a cargo receptor to selectively sort the membrane proteins involved in receptor-mediated endocytosis. AP-2 seems to play a role in the recycling of synaptic vesicle membranes from the presynaptic surface. AP-2 recognizes Y-X-X-[FILMV] (Y-X-X-Phi) and [ED]-X-X-X-L-[LI] endocytosis signal motifs within the cytosolic tails of transmembrane cargo molecules. AP-2 may also play a role in maintaining normal post-endocytic trafficking through the ARF6-regulated, non-clathrin pathway. During long-term potentiation in hippocampal neurons, AP-2 is responsible for the endocytosis of ADAM10. The AP-2 beta subunit acts via its C-terminal appendage domain as a scaffolding platform for endocytic accessory proteins; at least some clathrin-associated sorting proteins (CLASPs) are recognized by their [DE]-X(1,2)-F-X-X-[FL]-X-X-X-R motif. The AP-2 beta subunit binds to clathrin heavy chain, promoting clathrin lattice assembly; clathrin displaces at least some CLASPs from AP2B1 which probably then can be positioned for further coat assembly. The sequence is that of AP-2 complex subunit beta (Ap2b1) from Mus musculus (Mouse).